Here is a 232-residue protein sequence, read N- to C-terminus: Ubiquinone biosynthesis O-methyltransferase (232 aa).

S-adenosyl-L-methionine is bound by residues Arg36, Gly55, Asp76, and Met120.

This sequence belongs to the methyltransferase superfamily. UbiG/COQ3 family.

The catalysed reaction is a 3-demethylubiquinol + S-adenosyl-L-methionine = a ubiquinol + S-adenosyl-L-homocysteine + H(+). It carries out the reaction a 3-(all-trans-polyprenyl)benzene-1,2-diol + S-adenosyl-L-methionine = a 2-methoxy-6-(all-trans-polyprenyl)phenol + S-adenosyl-L-homocysteine + H(+). It participates in cofactor biosynthesis; ubiquinone biosynthesis. O-methyltransferase that catalyzes the 2 O-methylation steps in the ubiquinone biosynthetic pathway. This is Ubiquinone biosynthesis O-methyltransferase from Paraburkholderia xenovorans (strain LB400).